The primary structure comprises 875 residues: DNA mismatch repair protein MutS (875 aa).

ATP is bound at residue 625 to 632; that stretch reads GPNMGGKS.

It belongs to the DNA mismatch repair MutS family.

Its function is as follows. This protein is involved in the repair of mismatches in DNA. It is possible that it carries out the mismatch recognition step. This protein has a weak ATPase activity. The polypeptide is DNA mismatch repair protein MutS (Symbiobacterium thermophilum (strain DSM 24528 / JCM 14929 / IAM 14863 / T)).